The sequence spans 212 residues: Acyl-homoserine-lactone synthase (212 aa).

Belongs to the autoinducer synthase family.

It catalyses the reaction a fatty acyl-[ACP] + S-adenosyl-L-methionine = an N-acyl-L-homoserine lactone + S-methyl-5'-thioadenosine + holo-[ACP] + H(+). In terms of biological role, required for the synthesis of OHHL (N-(3-oxohexanoyl)-L-homoserine lactone), an autoinducer molecule which binds to the EchR transcriptional regulator. The chain is Acyl-homoserine-lactone synthase (echI) from Dickeya chrysanthemi (Pectobacterium chrysanthemi).